The following is a 479-amino-acid chain: Ribosomal RNA small subunit methyltransferase F (479 aa).

Residues 125 to 131, Glu-149, Asp-176, and Asp-194 contribute to the S-adenosyl-L-methionine site; that span reads AAAPGSK. Cys-247 serves as the catalytic Nucleophile.

The protein belongs to the class I-like SAM-binding methyltransferase superfamily. RsmB/NOP family.

It localises to the cytoplasm. It carries out the reaction cytidine(1407) in 16S rRNA + S-adenosyl-L-methionine = 5-methylcytidine(1407) in 16S rRNA + S-adenosyl-L-homocysteine + H(+). Specifically methylates the cytosine at position 1407 (m5C1407) of 16S rRNA. The protein is Ribosomal RNA small subunit methyltransferase F of Shigella boydii serotype 4 (strain Sb227).